We begin with the raw amino-acid sequence, 284 residues long: Bifunctional protein FolD (284 aa).

NADP(+)-binding positions include 164-166 (GTS) and isoleucine 230.

The protein belongs to the tetrahydrofolate dehydrogenase/cyclohydrolase family. In terms of assembly, homodimer.

The enzyme catalyses (6R)-5,10-methylene-5,6,7,8-tetrahydrofolate + NADP(+) = (6R)-5,10-methenyltetrahydrofolate + NADPH. It carries out the reaction (6R)-5,10-methenyltetrahydrofolate + H2O = (6R)-10-formyltetrahydrofolate + H(+). Its pathway is one-carbon metabolism; tetrahydrofolate interconversion. Its function is as follows. Catalyzes the oxidation of 5,10-methylenetetrahydrofolate to 5,10-methenyltetrahydrofolate and then the hydrolysis of 5,10-methenyltetrahydrofolate to 10-formyltetrahydrofolate. The protein is Bifunctional protein FolD of Mycoplasma capricolum subsp. capricolum (strain California kid / ATCC 27343 / NCTC 10154).